Here is a 278-residue protein sequence, read N- to C-terminus: Envelope glycoprotein L (278 aa).

An N-terminal signal peptide occupies residues 1 to 30; the sequence is MCRRPDCGFSFSPGPVILLWCCLLLPIVSS. The gL betaherpesvirus-type domain occupies 43-256; it reads VPAECPELTR…DKYYAGLPPE (214 aa). Cys154 and Cys159 form a disulfide bridge.

Belongs to the herpesviridae glycoprotein L (gL) family. Betaherpesvirinae gL subfamily. As to quaternary structure, interacts with glycoprotein H (gH); this interaction is necessary for the correct processing and cell surface expression of gH. Forms the envelope pentamer complex (PC) composed of gH, gL, UL128, UL130, and UL131A. The pentamer interacts with host NRP2. Forms the envelope trimer complex composed of gH, gL, and gO. The trimer interacts with host PDGFRA. The trimer also interacts with host EPHA2.

It is found in the virion membrane. The protein localises to the host cell membrane. It localises to the host Golgi apparatus. The protein resides in the host trans-Golgi network. Functionally, the heterodimer glycoprotein H-glycoprotein L is required for the fusion of viral and plasma membranes leading to virus entry into the host cell. Acts as a functional inhibitor of gH and maintains gH in an inhibited form. Upon binding to host integrins, gL dissociates from gH leading to activation of the viral fusion glycoproteins gB and gH. In human cytomegalovirus, forms two distincts complexes to mediate viral entry, a trimer and a pentamer at the surface of the virion envelope. The gH-gL-gO trimer is required for infection in fibroblasts by interacting with host PDGFRA, and in glioblastoma cells by interacting with host EPHA2. The gH-gL-UL128-UL130-UL131A pentamer is essential for viral entry in epithelial, endothelial and myeloid cells via interaction with host NRP2. This is Envelope glycoprotein L from Human cytomegalovirus (strain 5160) (HHV-5).